Here is a 239-residue protein sequence, read N- to C-terminus: Carboxy-S-adenosyl-L-methionine synthase (239 aa).

S-adenosyl-L-methionine-binding positions include tyrosine 36, 61–63 (GCS), 111–112 (DI), asparagine 126, and arginine 193.

The protein belongs to the class I-like SAM-binding methyltransferase superfamily. Cx-SAM synthase family. As to quaternary structure, homodimer.

The catalysed reaction is prephenate + S-adenosyl-L-methionine = carboxy-S-adenosyl-L-methionine + 3-phenylpyruvate + H2O. Catalyzes the conversion of S-adenosyl-L-methionine (SAM) to carboxy-S-adenosyl-L-methionine (Cx-SAM). This Nitratiruptor sp. (strain SB155-2) protein is Carboxy-S-adenosyl-L-methionine synthase.